A 381-amino-acid polypeptide reads, in one-letter code: S-adenosylmethionine synthase (381 aa).

His15 contacts ATP. Asp17 is a binding site for Mg(2+). Glu43 is a K(+) binding site. Residues Glu56 and Gln99 each coordinate L-methionine. The segment at 99–109 (QSPDINQGVDR) is flexible loop. ATP contacts are provided by residues 164–166 (DAK), 230–231 (RF), Asp239, 245–246 (RK), Ala262, and Lys266. Asp239 is an L-methionine binding site. Lys270 provides a ligand contact to L-methionine.

It belongs to the AdoMet synthase family. As to quaternary structure, homotetramer; dimer of dimers. It depends on Mg(2+) as a cofactor. K(+) is required as a cofactor.

Its subcellular location is the cytoplasm. It catalyses the reaction L-methionine + ATP + H2O = S-adenosyl-L-methionine + phosphate + diphosphate. It functions in the pathway amino-acid biosynthesis; S-adenosyl-L-methionine biosynthesis; S-adenosyl-L-methionine from L-methionine: step 1/1. Functionally, catalyzes the formation of S-adenosylmethionine (AdoMet) from methionine and ATP. The overall synthetic reaction is composed of two sequential steps, AdoMet formation and the subsequent tripolyphosphate hydrolysis which occurs prior to release of AdoMet from the enzyme. The sequence is that of S-adenosylmethionine synthase from Alteromonas mediterranea (strain DSM 17117 / CIP 110805 / LMG 28347 / Deep ecotype).